A 286-amino-acid polypeptide reads, in one-letter code: Pantothenate synthetase (286 aa).

32 to 39 lines the ATP pocket; it reads MGALHEGH. The active-site Proton donor is the His39. (R)-pantoate is bound at residue Gln63. Position 63 (Gln63) interacts with beta-alanine. ATP is bound at residue 149-152; that stretch reads GEKD. Gln155 contacts (R)-pantoate. ATP is bound by residues Leu178 and 186-189; that span reads SSSR.

It belongs to the pantothenate synthetase family. As to quaternary structure, homodimer.

Its subcellular location is the cytoplasm. It carries out the reaction (R)-pantoate + beta-alanine + ATP = (R)-pantothenate + AMP + diphosphate + H(+). The protein operates within cofactor biosynthesis; (R)-pantothenate biosynthesis; (R)-pantothenate from (R)-pantoate and beta-alanine: step 1/1. In terms of biological role, catalyzes the condensation of pantoate with beta-alanine in an ATP-dependent reaction via a pantoyl-adenylate intermediate. The chain is Pantothenate synthetase from Bartonella quintana (strain Toulouse) (Rochalimaea quintana).